We begin with the raw amino-acid sequence, 372 residues long: tRNA N6-adenosine threonylcarbamoyltransferase (372 aa).

Residues His133, His137, and Tyr154 each contribute to the a divalent metal cation site. Substrate-binding positions include 154–158, Asp186, Gly201, Glu205, and Asn301; that span reads YVSGG. Residue Asp330 coordinates a divalent metal cation.

Belongs to the KAE1 / TsaD family. Component of the EKC/KEOPS complex composed of at least BUD32, CGI121, GON7, KAE1 and PCC1; the whole complex dimerizes. The cofactor is a divalent metal cation.

It is found in the cytoplasm. Its subcellular location is the nucleus. The enzyme catalyses L-threonylcarbamoyladenylate + adenosine(37) in tRNA = N(6)-L-threonylcarbamoyladenosine(37) in tRNA + AMP + H(+). Functionally, component of the EKC/KEOPS complex that is required for the formation of a threonylcarbamoyl group on adenosine at position 37 (t(6)A37) in tRNAs that read codons beginning with adenine. The complex is probably involved in the transfer of the threonylcarbamoyl moiety of threonylcarbamoyl-AMP (TC-AMP) to the N6 group of A37. KAE1 likely plays a direct catalytic role in this reaction, but requires other protein(s) of the complex to fulfill this activity. The EKC/KEOPS complex also promotes both telomere uncapping and telomere elongation. The complex is required for efficient recruitment of transcriptional coactivators. The sequence is that of tRNA N6-adenosine threonylcarbamoyltransferase from Candida albicans (strain SC5314 / ATCC MYA-2876) (Yeast).